The sequence spans 307 residues: Nucleotide-binding protein Achl_1824 (307 aa).

30-37 contacts ATP; the sequence is GMSGAGRS. 81–84 is a GTP binding site; sequence DVRS.

Belongs to the RapZ-like family.

Its function is as follows. Displays ATPase and GTPase activities. The chain is Nucleotide-binding protein Achl_1824 from Pseudarthrobacter chlorophenolicus (strain ATCC 700700 / DSM 12829 / CIP 107037 / JCM 12360 / KCTC 9906 / NCIMB 13794 / A6) (Arthrobacter chlorophenolicus).